The chain runs to 321 residues: Mitochondrial coenzyme A transporter SLC25A42 (321 aa).

Solcar repeat units lie at residues R33–I119, L131–T216, and P226–L314. The next 6 membrane-spanning stretches (helical) occupy residues V35–P55, L91–C111, L137–L154, G191–F208, L232–V252, and V295–L315.

This sequence belongs to the mitochondrial carrier (TC 2.A.29) family.

It localises to the mitochondrion inner membrane. It carries out the reaction ADP(out) + CoA(in) = ADP(in) + CoA(out). It catalyses the reaction 3'-dephospho-CoA(in) + ADP(out) = 3'-dephospho-CoA(out) + ADP(in). The catalysed reaction is adenosine 3',5'-bisphosphate(in) + ADP(out) = adenosine 3',5'-bisphosphate(out) + ADP(in). The enzyme catalyses AMP(in) + ADP(out) = AMP(out) + ADP(in). It carries out the reaction dADP(in) + ADP(out) = dADP(out) + ADP(in). It catalyses the reaction ADP(in) + ATP(out) = ADP(out) + ATP(in). Functionally, mitochondrial carrier mediating the transport of coenzyme A (CoA) in mitochondria in exchange for intramitochondrial (deoxy)adenine nucleotides and adenosine 3',5'-diphosphate. The sequence is that of Mitochondrial coenzyme A transporter SLC25A42 (slc25a42) from Danio rerio (Zebrafish).